We begin with the raw amino-acid sequence, 406 residues long: Vacuole membrane protein 1 (406 aa).

The segment at 1-22 (MAENGTDCEQRRVGMPKEQNNG) is disordered. The Cytoplasmic portion of the chain corresponds to 1–42 (MAENGTDCEQRRVGMPKEQNNGSFQDPSFMCNRKRRDREERQ). Residues 43–63 (SIVLWRKPLITLQYFILEVLI) traverse the membrane as a helical segment. Topologically, residues 64-76 (NLKEWSVRLWHRR) are extracellular. A helical membrane pass occupies residues 77 to 97 (MMVVSVLLLLAVLSVAYYIEG). Residues 98 to 110 (EHQQCVQYIEKKC) lie on the Cytoplasmic side of the membrane. Residues 111 to 131 (LWCAYWVGLGILSSVGLGTGL) form a helical membrane-spanning segment. Topologically, residues 132–250 (HTFLLYLGPH…ATRAKLTVQN (119 aa)) are extracellular. The tract at residues 173–316 (GTEGAISLWT…FVIITFSKHI (144 aa)) is VTT domain. A helical transmembrane segment spans residues 251-271 (LVQKVGFLGILACASIPNPLF). Residues 272-273 (DL) are Cytoplasmic-facing. The helical transmembrane segment at 274–294 (AGITCGHFLVPFWTFFGATLI) threads the bilayer. Topologically, residues 295–306 (GKAIIKMHIQKL) are extracellular. A helical membrane pass occupies residues 307–327 (FVIITFSKHIVEQMVSLIGVI). The Cytoplasmic segment spans residues 328-363 (PSIGPSLQKPFQEYLEAQRKKLHHKGDSGTPQSENW). Residues 364–384 (LSWAFEKLVIIMVFYFILSII) traverse the membrane as a helical segment. The Extracellular segment spans residues 385-406 (NSMAQSYAKRVQQKKLSVEKTK).

Belongs to the VMP1 family.

The protein resides in the endoplasmic reticulum-Golgi intermediate compartment membrane. Its subcellular location is the cell membrane. It is found in the vacuole membrane. The protein localises to the endoplasmic reticulum membrane. The catalysed reaction is a 1,2-diacyl-sn-glycero-3-phospho-L-serine(in) = a 1,2-diacyl-sn-glycero-3-phospho-L-serine(out). It catalyses the reaction cholesterol(in) = cholesterol(out). It carries out the reaction a 1,2-diacyl-sn-glycero-3-phosphocholine(in) = a 1,2-diacyl-sn-glycero-3-phosphocholine(out). The enzyme catalyses a 1,2-diacyl-sn-glycero-3-phosphoethanolamine(in) = a 1,2-diacyl-sn-glycero-3-phosphoethanolamine(out). In terms of biological role, phospholipid scramblase involved in lipid homeostasis and membrane dynamics processes. Has phospholipid scramblase activity toward cholesterol and phosphatidylserine, as well as phosphatidylethanolamine and phosphatidylcholine. Required for autophagosome formation: participates in early stages of autophagosome biogenesis at the endoplasmic reticulum (ER) membrane by reequilibrating the leaflets of the ER as lipids are extracted by atg2 (atg2a or atg2b) to mediate autophagosome assembly. In addition to autophagy, involved in other processes in which phospholipid scramblase activity is required. Modulates ER contacts with lipid droplets, mitochondria and endosomes. The chain is Vacuole membrane protein 1 from Xenopus laevis (African clawed frog).